Consider the following 116-residue polypeptide: Large ribosomal subunit protein bL17 (116 aa).

This sequence belongs to the bacterial ribosomal protein bL17 family. As to quaternary structure, part of the 50S ribosomal subunit. Contacts protein L32.

The protein is Large ribosomal subunit protein bL17 of Cyanothece sp. (strain PCC 7425 / ATCC 29141).